We begin with the raw amino-acid sequence, 219 residues long: 3,4-dihydroxy-2-butanone 4-phosphate synthase (219 aa).

D-ribulose 5-phosphate is bound by residues 28-29 (RE), Asp-33, 140-144 (REGHT), and Glu-164. Residue Glu-29 coordinates Mg(2+). His-143 serves as a coordination point for Mg(2+).

The protein belongs to the DHBP synthase family. As to quaternary structure, homodimer. Mg(2+) serves as cofactor. Requires Mn(2+) as cofactor.

It carries out the reaction D-ribulose 5-phosphate = (2S)-2-hydroxy-3-oxobutyl phosphate + formate + H(+). It functions in the pathway cofactor biosynthesis; riboflavin biosynthesis; 2-hydroxy-3-oxobutyl phosphate from D-ribulose 5-phosphate: step 1/1. Functionally, catalyzes the conversion of D-ribulose 5-phosphate to formate and 3,4-dihydroxy-2-butanone 4-phosphate. The polypeptide is 3,4-dihydroxy-2-butanone 4-phosphate synthase (Methanocorpusculum labreanum (strain ATCC 43576 / DSM 4855 / Z)).